Here is a 1335-residue protein sequence, read N- to C-terminus: Aldehyde oxidase 3 (1335 aa).

The region spanning 8–95 (DELIFFVNGK…GAAVTTVEGI (88 aa)) is the 2Fe-2S ferredoxin-type domain. [2Fe-2S] cluster-binding residues include Cys47, Cys52, Cys55, and Cys77. Position 116 (Gln116) interacts with Mo-molybdopterin. Positions 117, 120, 152, and 154 each coordinate [2Fe-2S] cluster. Residues 236–421 (FRGERTTWIA…ISVFVPRSSK (186 aa)) form the FAD-binding PCMH-type domain. 264–271 (LVIGNTYL) contacts FAD. The residue at position 320 (Ser320) is a Phosphoserine. FAD contacts are provided by Ser354, His358, Asp367, and Leu411. Residues Ala802, Leu1043, and Gln1199 each coordinate Mo-molybdopterin. Glu1266 serves as the catalytic Proton acceptor; for azaheterocycle hydroxylase activity.

It belongs to the xanthine dehydrogenase family. In terms of assembly, homodimer. Requires [2Fe-2S] cluster as cofactor. FAD is required as a cofactor. The cofactor is Mo-molybdopterin. As to expression, highly expressed in liver (at protein level). In liver, the expression is greater in males than females.

Its subcellular location is the cytoplasm. It carries out the reaction an aldehyde + O2 + H2O = a carboxylate + H2O2 + H(+). Its activity is regulated as follows. Inhibited by potassium cyanide, menadione, benzamidine, raloxifene and norharmane. Oxidase with broad substrate specificity, oxidizing aromatic azaheterocycles, such as N1-methylnicotinamide and phthalazine, as well as aldehydes, such as benzaldehyde, retinal and pyridoxal. Plays a key role in the metabolism of xenobiotics and drugs containing aromatic azaheterocyclic substituents. Is probably involved in the regulation of reactive oxygen species homeostasis. May be a prominent source of superoxide generation via the one-electron reduction of molecular oxygen. May also catalyze nitric oxide (NO) production via the reduction of nitrite to NO with NADH or aldehyde as electron donor. In Mus musculus (Mouse), this protein is Aldehyde oxidase 3 (Aox3).